A 548-amino-acid chain; its full sequence is Probable malate:quinone oxidoreductase (548 aa).

Residues 521–548 (DKPQAADSTPKPQLKPQPVQKEVADIAL) form a disordered region. Over residues 530–541 (PKPQLKPQPVQK) the composition is skewed to low complexity.

Belongs to the MQO family. The cofactor is FAD.

It carries out the reaction (S)-malate + a quinone = a quinol + oxaloacetate. Its pathway is carbohydrate metabolism; tricarboxylic acid cycle; oxaloacetate from (S)-malate (quinone route): step 1/1. This Escherichia coli (strain 55989 / EAEC) protein is Probable malate:quinone oxidoreductase.